The chain runs to 498 residues: Glycerol kinase (498 aa).

T12 provides a ligand contact to ADP. Positions 12, 13, and 14 each coordinate ATP. Residue T12 coordinates sn-glycerol 3-phosphate. R16 is an ADP binding site. Positions 82, 83, 134, and 244 each coordinate sn-glycerol 3-phosphate. Glycerol is bound by residues R82, E83, Y134, D244, and Q245. ADP contacts are provided by T266 and G310. ATP is bound by residues T266, G310, Q314, and G411. The ADP site is built by G411 and N415.

It belongs to the FGGY kinase family.

The enzyme catalyses glycerol + ATP = sn-glycerol 3-phosphate + ADP + H(+). Its pathway is polyol metabolism; glycerol degradation via glycerol kinase pathway; sn-glycerol 3-phosphate from glycerol: step 1/1. Inhibited by fructose 1,6-bisphosphate (FBP). Its function is as follows. Key enzyme in the regulation of glycerol uptake and metabolism. Catalyzes the phosphorylation of glycerol to yield sn-glycerol 3-phosphate. In Chloroflexus aurantiacus (strain ATCC 29366 / DSM 635 / J-10-fl), this protein is Glycerol kinase.